Here is a 293-residue protein sequence, read N- to C-terminus: Formamidopyrimidine-DNA glycosylase (293 aa).

The Schiff-base intermediate with DNA role is filled by P2. E3 (proton donor) is an active-site residue. K58 serves as the catalytic Proton donor; for beta-elimination activity. Residues H104, R123, and K166 each coordinate DNA. The segment at 257 to 293 (AAYDREGERCRTDGCGGAVKRFVQNGRSTFWCSGCQK) adopts an FPG-type zinc-finger fold. The active-site Proton donor; for delta-elimination activity is the R283.

It belongs to the FPG family. Monomer. Zn(2+) is required as a cofactor.

The enzyme catalyses Hydrolysis of DNA containing ring-opened 7-methylguanine residues, releasing 2,6-diamino-4-hydroxy-5-(N-methyl)formamidopyrimidine.. It carries out the reaction 2'-deoxyribonucleotide-(2'-deoxyribose 5'-phosphate)-2'-deoxyribonucleotide-DNA = a 3'-end 2'-deoxyribonucleotide-(2,3-dehydro-2,3-deoxyribose 5'-phosphate)-DNA + a 5'-end 5'-phospho-2'-deoxyribonucleoside-DNA + H(+). Its function is as follows. Involved in base excision repair of DNA damaged by oxidation or by mutagenic agents. Acts as a DNA glycosylase that recognizes and removes damaged bases. Has a preference for oxidized purines, such as 7,8-dihydro-8-oxoguanine (8-oxoG). Has AP (apurinic/apyrimidinic) lyase activity and introduces nicks in the DNA strand. Cleaves the DNA backbone by beta-delta elimination to generate a single-strand break at the site of the removed base with both 3'- and 5'-phosphates. The polypeptide is Formamidopyrimidine-DNA glycosylase (Rhodopseudomonas palustris (strain BisB5)).